Reading from the N-terminus, the 145-residue chain is Bacilliredoxin SH1401 (145 aa).

Belongs to the bacilliredoxin family.

This Staphylococcus haemolyticus (strain JCSC1435) protein is Bacilliredoxin SH1401.